A 129-amino-acid polypeptide reads, in one-letter code: MEHPSTNYTPEQQHEKLKYYVLIPKHLWSYIKYGTHVRYYTTQNVFRVGGFVLQNPYEAVIKNEVKTAIRLQNSFNTKAKGHVTWAVPYDNISKLYAKPDAIMLTIQENVEKALHALNQNVLTLASKIR.

The protein belongs to the asfivirus C129R family.

The protein localises to the virion. Plays a role in the inhibition of type I interferon signaling pathway. Mechanistically, specifically interacts with 2',3'-cGAMP and cleaves it via its phosphodiesterase activity. In turn, prevents 2',3'-cGAMP interaction with host ER-resident STING1 leading to inhibition of downstream signaling pathway and type I interferon production. This is an uncharacterized protein from African swine fever virus (strain Badajoz 1971 Vero-adapted) (Ba71V).